The chain runs to 137 residues: ATP synthase epsilon chain (137 aa).

The protein belongs to the ATPase epsilon chain family. F-type ATPases have 2 components, CF(1) - the catalytic core - and CF(0) - the membrane proton channel. CF(1) has five subunits: alpha(3), beta(3), gamma(1), delta(1), epsilon(1). CF(0) has three main subunits: a, b and c.

It is found in the cell membrane. Functionally, produces ATP from ADP in the presence of a proton gradient across the membrane. The protein is ATP synthase epsilon chain of Mycoplasmopsis synoviae (strain 53) (Mycoplasma synoviae).